Consider the following 43-residue polypeptide: SPbeta prophage-derived uncharacterized protein YotD (43 aa).

The chain is SPbeta prophage-derived uncharacterized protein YotD (yotD) from Bacillus subtilis (strain 168).